Consider the following 405-residue polypeptide: Argininosuccinate synthase (405 aa).

12-20 (AYSGGLDTS) lines the ATP pocket. Residues tyrosine 92 and serine 97 each contribute to the L-citrulline site. Glycine 122 contributes to the ATP binding site. Residues threonine 124, asparagine 128, and aspartate 129 each contribute to the L-aspartate site. Asparagine 128 provides a ligand contact to L-citrulline. Positions 132, 181, 190, 266, and 278 each coordinate L-citrulline.

The protein belongs to the argininosuccinate synthase family. Type 1 subfamily. As to quaternary structure, homotetramer.

The protein localises to the cytoplasm. The enzyme catalyses L-citrulline + L-aspartate + ATP = 2-(N(omega)-L-arginino)succinate + AMP + diphosphate + H(+). It participates in amino-acid biosynthesis; L-arginine biosynthesis; L-arginine from L-ornithine and carbamoyl phosphate: step 2/3. The sequence is that of Argininosuccinate synthase from Cronobacter sakazakii (strain ATCC BAA-894) (Enterobacter sakazakii).